The primary structure comprises 302 residues: N-acetylmuramic acid 6-phosphate etherase (302 aa).

In terms of domain architecture, SIS spans 57-220; the sequence is VSEKLKNNGR…TTAVMIKLGK (164 aa). Glutamate 85 (proton donor) is an active-site residue. Glutamate 116 is an active-site residue.

Belongs to the GCKR-like family. MurNAc-6-P etherase subfamily. Homodimer.

The catalysed reaction is N-acetyl-D-muramate 6-phosphate + H2O = N-acetyl-D-glucosamine 6-phosphate + (R)-lactate. It functions in the pathway amino-sugar metabolism; N-acetylmuramate degradation. Functionally, specifically catalyzes the cleavage of the D-lactyl ether substituent of MurNAc 6-phosphate, producing GlcNAc 6-phosphate and D-lactate. The sequence is that of N-acetylmuramic acid 6-phosphate etherase from Clostridium acetobutylicum (strain ATCC 824 / DSM 792 / JCM 1419 / IAM 19013 / LMG 5710 / NBRC 13948 / NRRL B-527 / VKM B-1787 / 2291 / W).